We begin with the raw amino-acid sequence, 399 residues long: MAKNRHLFTSESVSDGHPDKIADQISDAILDAIISKDPDARVACETTVTTGLVLVAGEITTSVYVDIPKIVRDTIKEIGYTRAKYGFDAETCAVLTAIDEQSPDIAQGVDEALESRSGKEIDAAIEAIGAGDQGLMFGFATDETEELMPLPIFLAHGLARKLTELRKTNKLDYLRPDAKTQVTVEYDEFNQPVRIDTIVVSTQHHPDITQEQIAKDLHTYLFPEVIDASFLDEDTKYFINPTGRFVIGGPLGDAGLTGRKIIVDTYGGYARHGGGAFSGKDPTKVDRSGAYAARYVAKNIVAAGLAKKVEVQVAYAIGVARPVSISIDTYGTSDYSEQELIDGVNELFDLRPAGIIHMLDLRRPIYRQTAAFGHFGRSDLDLPWERTDKAEALKKLIVK.

Residue His-17 coordinates ATP. Asp-19 contributes to the Mg(2+) binding site. Glu-45 contacts K(+). L-methionine-binding residues include Glu-58 and Gln-101. The tract at residues Gln-101 to Glu-111 is flexible loop. ATP is bound by residues Asp-177–Lys-179, Arg-244–Phe-245, Asp-253, Arg-259–Lys-260, Ala-276, and Lys-280. L-methionine is bound at residue Asp-253. Residue Lys-284 participates in L-methionine binding.

The protein belongs to the AdoMet synthase family. Homotetramer; dimer of dimers. Requires Mg(2+) as cofactor. K(+) is required as a cofactor.

Its subcellular location is the cytoplasm. The catalysed reaction is L-methionine + ATP + H2O = S-adenosyl-L-methionine + phosphate + diphosphate. It participates in amino-acid biosynthesis; S-adenosyl-L-methionine biosynthesis; S-adenosyl-L-methionine from L-methionine: step 1/1. Catalyzes the formation of S-adenosylmethionine (AdoMet) from methionine and ATP. The overall synthetic reaction is composed of two sequential steps, AdoMet formation and the subsequent tripolyphosphate hydrolysis which occurs prior to release of AdoMet from the enzyme. The polypeptide is S-adenosylmethionine synthase (Listeria monocytogenes serotype 4b (strain CLIP80459)).